The chain runs to 207 residues: Cytochrome c oxidase subunit 3 (207 aa).

Transmembrane regions (helical) follow at residues 30–50 (FWLFLGGETVLFASLFATFLA), 67–87 (VTLVFIATMLLLTSSLTSVYA), 101–121 (LWLGITILLGAGFLGLEIYEF), 144–164 (LVGTHGAHVAFGLMWISTLMI), and 186–206 (WHFIDVVWVFIFTVVYLMGMV).

This sequence belongs to the cytochrome c oxidase subunit 3 family.

The protein localises to the cell membrane. It carries out the reaction 4 Fe(II)-[cytochrome c] + O2 + 8 H(+)(in) = 4 Fe(III)-[cytochrome c] + 2 H2O + 4 H(+)(out). This chain is Cytochrome c oxidase subunit 3 (ctaE), found in Bacillus subtilis (strain 168).